The following is a 336-amino-acid chain: Calcium uniporter regulatory subunit MCUb, mitochondrial (336 aa).

Residues 1-35 (MLQRGLWPWRTRLLPTPGTWRPARPWPLPPPPQVL) constitute a mitochondrion transit peptide. The stretch at 179 to 210 (ESQKKREHHLLEKIDHLKEQLQPLEQVKAGIE) forms a coiled coil. 2 helical membrane-spanning segments follow: residues 220 to 240 (LLWA…WLTW) and 250 to 270 (PVTY…FIVT). Positions 297 to 323 (FDVQQYNKLKEDLAKAKESLKQARHSL) form a coiled coil.

Belongs to the MCU (TC 1.A.77) family. As to quaternary structure, homooligomer. Associates with the uniplex complex, composed of MCU, MICU1, MICU2 and EMRE/SMDT1, inhibiting its activity.

It is found in the mitochondrion inner membrane. Functionally, negative regulator of the mitochondrial calcium uniporter (MCU), a channel that mediates calcium uptake into the mitochondrial matrix. MCUB is required to limit mitochondrial calcium overload during stress. Acts as a dominant-negative regulator that displaces MCU from the functional uniplex complex and thereby decreases the association of calcium sensors MICU1 and MICU2, preventing channel gating. Mitochondrial calcium homeostasis plays key roles in mitochondrial metabolism. Acts as an important regulator of mitochondrial metabolism in response to stress in muscle cells: induced in response to fasting, leading to restrict mitochondrial calcium uptake, resulting in reprogramming of mitochondria toward fatty acid oxidation preference. Acts as a regulator of macrophage polarization during skeletal muscle regeneration: inhibition of mitochondrial calcium uptake drives differentiation of macrophages with anti-inflammatory profile, promoting the differentiation and fusion of satellite cells. This is Calcium uniporter regulatory subunit MCUb, mitochondrial from Homo sapiens (Human).